Reading from the N-terminus, the 221-residue chain is Thiamine-phosphate synthase (221 aa).

4-amino-2-methyl-5-(diphosphooxymethyl)pyrimidine contacts are provided by residues 39–43 and Asn76; that span reads QLRCK. Mg(2+) contacts are provided by Asp77 and Asp96. Ser114 contacts 4-amino-2-methyl-5-(diphosphooxymethyl)pyrimidine. 140 to 142 lines the 2-[(2R,5Z)-2-carboxy-4-methylthiazol-5(2H)-ylidene]ethyl phosphate pocket; it reads TPT. A 4-amino-2-methyl-5-(diphosphooxymethyl)pyrimidine-binding site is contributed by Lys143. Residue Gly171 coordinates 2-[(2R,5Z)-2-carboxy-4-methylthiazol-5(2H)-ylidene]ethyl phosphate.

Belongs to the thiamine-phosphate synthase family. Mg(2+) is required as a cofactor.

The enzyme catalyses 2-[(2R,5Z)-2-carboxy-4-methylthiazol-5(2H)-ylidene]ethyl phosphate + 4-amino-2-methyl-5-(diphosphooxymethyl)pyrimidine + 2 H(+) = thiamine phosphate + CO2 + diphosphate. It catalyses the reaction 2-(2-carboxy-4-methylthiazol-5-yl)ethyl phosphate + 4-amino-2-methyl-5-(diphosphooxymethyl)pyrimidine + 2 H(+) = thiamine phosphate + CO2 + diphosphate. The catalysed reaction is 4-methyl-5-(2-phosphooxyethyl)-thiazole + 4-amino-2-methyl-5-(diphosphooxymethyl)pyrimidine + H(+) = thiamine phosphate + diphosphate. Its pathway is cofactor biosynthesis; thiamine diphosphate biosynthesis; thiamine phosphate from 4-amino-2-methyl-5-diphosphomethylpyrimidine and 4-methyl-5-(2-phosphoethyl)-thiazole: step 1/1. Condenses 4-methyl-5-(beta-hydroxyethyl)thiazole monophosphate (THZ-P) and 2-methyl-4-amino-5-hydroxymethyl pyrimidine pyrophosphate (HMP-PP) to form thiamine monophosphate (TMP). The protein is Thiamine-phosphate synthase of Deinococcus geothermalis (strain DSM 11300 / CIP 105573 / AG-3a).